The following is a 382-amino-acid chain: Fimbrial usher domain-containing protein YdeT (382 aa).

This chain is Fimbrial usher domain-containing protein YdeT (ydeT), found in Escherichia coli O157:H7.